A 466-amino-acid polypeptide reads, in one-letter code: Probable WRKY transcription factor 32 (466 aa).

Disordered regions lie at residues 1–45 (MEED…MEDL) and 140–166 (SVPTKQEQRSDSPVVNRLSVTPVPRTP). The span at 8 to 38 (DEAKTYTVEKSEKVEPEKDGLSQFRDEEKSL) shows a compositional bias: basic and acidic residues. The WRKY 1 DNA-binding region spans 162 to 226 (VPRTPARDGY…NKGLHTHEPP (65 aa)). Residues Cys193, Cys198, His221, and His223 each contribute to the Zn(2+) site. Residues 284 to 317 (HCENEAVEEPEPKRRLKKDNSQSSDSVSKPGKKN) form a disordered region. Residues 325-390 (GDVGICGDGY…YKGVHNHDMP (66 aa)) constitute a DNA-binding region (WRKY 2). Positions 356, 361, 385, and 387 each coordinate Zn(2+). The tract at residues 410–439 (TSMRTRTDDQVNIPTSSQCSVGRESEKQSK) is disordered. Polar residues predominate over residues 419–429 (QVNIPTSSQCS).

Belongs to the WRKY group I family.

The protein resides in the nucleus. Functionally, transcription factor. Interacts specifically with the W box (5'-(T)TGAC[CT]-3'), a frequently occurring elicitor-responsive cis-acting element. This is Probable WRKY transcription factor 32 (WRKY32) from Arabidopsis thaliana (Mouse-ear cress).